The primary structure comprises 223 residues: Probable transaldolase (223 aa).

K86 acts as the Schiff-base intermediate with substrate in catalysis.

It belongs to the transaldolase family. Type 3B subfamily.

The protein resides in the cytoplasm. It carries out the reaction D-sedoheptulose 7-phosphate + D-glyceraldehyde 3-phosphate = D-erythrose 4-phosphate + beta-D-fructose 6-phosphate. It functions in the pathway carbohydrate degradation; pentose phosphate pathway; D-glyceraldehyde 3-phosphate and beta-D-fructose 6-phosphate from D-ribose 5-phosphate and D-xylulose 5-phosphate (non-oxidative stage): step 2/3. In terms of biological role, transaldolase is important for the balance of metabolites in the pentose-phosphate pathway. In Thermoplasma volcanium (strain ATCC 51530 / DSM 4299 / JCM 9571 / NBRC 15438 / GSS1), this protein is Probable transaldolase (tal).